The sequence spans 852 residues: Alanine--tRNA ligase (852 aa).

Residues His-554, His-558, Cys-656, and His-660 each coordinate Zn(2+).

This sequence belongs to the class-II aminoacyl-tRNA synthetase family. Requires Zn(2+) as cofactor.

Its subcellular location is the cytoplasm. The enzyme catalyses tRNA(Ala) + L-alanine + ATP = L-alanyl-tRNA(Ala) + AMP + diphosphate. Catalyzes the attachment of alanine to tRNA(Ala) in a two-step reaction: alanine is first activated by ATP to form Ala-AMP and then transferred to the acceptor end of tRNA(Ala). Also edits incorrectly charged Ser-tRNA(Ala) and Gly-tRNA(Ala) via its editing domain. This chain is Alanine--tRNA ligase, found in Campylobacter curvus (strain 525.92).